Reading from the N-terminus, the 102-residue chain is Large ribosomal subunit protein bL21 (102 aa).

This sequence belongs to the bacterial ribosomal protein bL21 family. In terms of assembly, part of the 50S ribosomal subunit. Contacts protein L20.

In terms of biological role, this protein binds to 23S rRNA in the presence of protein L20. The sequence is that of Large ribosomal subunit protein bL21 from Neisseria meningitidis serogroup A / serotype 4A (strain DSM 15465 / Z2491).